A 208-amino-acid polypeptide reads, in one-letter code: Ribosomal RNA large subunit methyltransferase E (208 aa).

S-adenosyl-L-methionine contacts are provided by Gly-62, Trp-64, Asp-82, Asp-98, and Asp-123. The Proton acceptor role is filled by Lys-163.

It belongs to the class I-like SAM-binding methyltransferase superfamily. RNA methyltransferase RlmE family.

It is found in the cytoplasm. It carries out the reaction uridine(2552) in 23S rRNA + S-adenosyl-L-methionine = 2'-O-methyluridine(2552) in 23S rRNA + S-adenosyl-L-homocysteine + H(+). In terms of biological role, specifically methylates the uridine in position 2552 of 23S rRNA at the 2'-O position of the ribose in the fully assembled 50S ribosomal subunit. This chain is Ribosomal RNA large subunit methyltransferase E, found in Glaesserella parasuis serovar 5 (strain SH0165) (Haemophilus parasuis).